A 135-amino-acid polypeptide reads, in one-letter code: RuBisCO chaperone RbcX (135 aa).

The interval 103–135 (QHLERMTQVSLSHPSPESEQQQFSDPDWDNLAS) is disordered. Positions 109–126 (TQVSLSHPSPESEQQQFS) are enriched in polar residues.

It belongs to the RbcX family. As to quaternary structure, homodimer. Interacts with the exposed C-terminal peptide of RbcL ('Glu-459-Asp-468'); binds 1 RbcL peptide per homodimer. Contacts a second RbcL monomer via its peripheral polar surface. A slightly longer RbcL peptide binds to RbcX2 with a higher affinity.

It is found in the carboxysome. Its subcellular location is the cytoplasm. Its function is as follows. An RbcL-specific chaperone. The central cleft of the RbcX homodimer (RbcX2) binds the C-terminus of an RbcL monomer, stabilizing the C-terminus and probably preventing its reassociation with chaperonin GroEL-ES. At the same time the peripheral region of RbcX2 binds a second RbcL monomer, bridging the RbcL homodimers in the correct orientation. The RbcX2(2)-bound RbcL dimers then assemble into the RbcL8 core (RbcL8-(RbcX2)8). RbcS binding triggers the release of RbcX2. In terms of biological role, required for optimal reconstitution of RuBisCO upon expression of rbcL-rbcS subunits in E.coli. The sequence is that of RuBisCO chaperone RbcX from Anabaena sp. (strain CA / ATCC 33047).